The sequence spans 207 residues: Minor capsid protein P11 (207 aa).

Residues 7–23 (VKVVAILAVLFLVYKLW) form a hydrophobic region. The tract at residues 63-82 (ETDAEDDDIYTGETDDMYDG) is disordered.

Interacts with the major capsid protein.

It localises to the virion. Its function is as follows. One of the minor capsid proteins that constitute a network internal to the major capsid proteins and outside the lipid membrane. The minor capsid proteins glue and stabilize the capsomers. the p11 zip protein binds together the neighboring symmetrons. In Paramecium bursaria Chlorella virus 1 (PBCV-1), this protein is Minor capsid protein P11.